Reading from the N-terminus, the 492-residue chain is UPF0236 protein TTE0402 (492 aa).

Belongs to the UPF0236 family.

The chain is UPF0236 protein TTE0402 from Caldanaerobacter subterraneus subsp. tengcongensis (strain DSM 15242 / JCM 11007 / NBRC 100824 / MB4) (Thermoanaerobacter tengcongensis).